Reading from the N-terminus, the 753-residue chain is Pumilio homolog 23 (753 aa).

The segment at 1-84 (MVSVGSKSLP…SEFEHQNQFV (84 aa)) is disordered. 3 stretches are compositionally biased toward basic and acidic residues: residues 23 to 38 (MGER…ERNK), 47 to 57 (GNRGFDVDSSK), and 73 to 84 (KHSEFEHQNQFV). 8 Pumilio repeats span residues 123 to 158 (ETRG…SFIR), 159 to 198 (NSAS…SVIE), 206 to 244 (KVIV…ELYG), 284 to 325 (GLLS…EIIP), 345 to 380 (NVAK…EMFN), 381 to 418 (KVFK…IMWE), 526 to 563 (SMKA…RLII), and 564 to 599 (KLRG…AIAS). The PUM-HD domain occupies 322–675 (EIIPLILRCN…DASEDAAQEI (354 aa)). Composition is skewed to basic and acidic residues over residues 677–688 (VKNTRKEIDHHP), 699–712 (HAKD…GEKR), and 719–728 (KTSEATDKPK). The segment at 677–753 (VKNTRKEIDH…KNRHSNKMRI (77 aa)) is disordered. A compositionally biased stretch (basic residues) spans 744–753 (KNRHSNKMRI).

The protein resides in the nucleus. Its subcellular location is the nucleolus. Functionally, sequence-specific RNA-binding protein that regulates translation and mRNA stability by binding the 3'-UTR of target mRNAs. This chain is Pumilio homolog 23 (APUM23), found in Arabidopsis thaliana (Mouse-ear cress).